The sequence spans 662 residues: Sporulation protein RMD8 (662 aa).

Disordered stretches follow at residues 1-136 (MSYK…RTSK), 286-320 (YELE…SFNP), and 346-406 (LKKE…QNDF). The residue at position 2 (Ser-2) is an N-acetylserine. Residues 99 to 121 (SARREERLSSSSSDRPRQYERLS) are compositionally biased toward basic and acidic residues. Over residues 286 to 304 (YELETSGNNNNANQDTTTV) the composition is skewed to polar residues. Residues 383–395 (SSRSPASPSSIST) are compositionally biased toward low complexity. A helical membrane pass occupies residues 630 to 647 (VTWWFILVILFGVIFSLT).

It belongs to the RMD1/sif2 family.

Its subcellular location is the membrane. In terms of biological role, required for sporulation. This is Sporulation protein RMD8 (RMD8) from Saccharomyces cerevisiae (strain ATCC 204508 / S288c) (Baker's yeast).